Reading from the N-terminus, the 427-residue chain is Enolase (427 aa).

Gln-162 is a (2R)-2-phosphoglycerate binding site. Residue Glu-204 is the Proton donor of the active site. The Mg(2+) site is built by Asp-241, Glu-282, and Asp-309. Positions 334, 363, 364, and 385 each coordinate (2R)-2-phosphoglycerate. Lys-334 (proton acceptor) is an active-site residue.

It belongs to the enolase family. Requires Mg(2+) as cofactor.

Its subcellular location is the cytoplasm. It is found in the secreted. The protein localises to the cell surface. The enzyme catalyses (2R)-2-phosphoglycerate = phosphoenolpyruvate + H2O. The protein operates within carbohydrate degradation; glycolysis; pyruvate from D-glyceraldehyde 3-phosphate: step 4/5. In terms of biological role, catalyzes the reversible conversion of 2-phosphoglycerate (2-PG) into phosphoenolpyruvate (PEP). It is essential for the degradation of carbohydrates via glycolysis. This is Enolase from Frankia alni (strain DSM 45986 / CECT 9034 / ACN14a).